A 433-amino-acid polypeptide reads, in one-letter code: Shikimate O-hydroxycinnamoyltransferase (433 aa).

The active-site Proton acceptor is H153. 4-coumaroyl-CoA is bound by residues 252-255 (SSYE), 284-290 (DGRSRLR), and 370-373 (SWVR). D380 (proton acceptor) is an active-site residue.

Belongs to the plant acyltransferase family.

The enzyme catalyses shikimate + 4-coumaroyl-CoA = trans-4-coumaroylshikimate + CoA. In terms of biological role, acyltransferase involved in the biosynthesis of lignin. Accepts caffeoyl-CoA and p-coumaroyl-CoA as substrates and transfers the acyl group on both shikimate and quinate acceptors. The protein is Shikimate O-hydroxycinnamoyltransferase (HST) of Arabidopsis thaliana (Mouse-ear cress).